Reading from the N-terminus, the 1382-residue chain is DNA-directed RNA polymerase subunit beta' (1382 aa).

Zn(2+)-binding residues include Cys-70, Cys-72, Cys-85, and Cys-88. Asp-460, Asp-462, and Asp-464 together coordinate Mg(2+). Cys-808, Cys-882, Cys-889, and Cys-892 together coordinate Zn(2+).

This sequence belongs to the RNA polymerase beta' chain family. In terms of assembly, the RNAP catalytic core consists of 2 alpha, 1 beta, 1 beta' and 1 omega subunit. When a sigma factor is associated with the core the holoenzyme is formed, which can initiate transcription. It depends on Mg(2+) as a cofactor. Zn(2+) is required as a cofactor.

It carries out the reaction RNA(n) + a ribonucleoside 5'-triphosphate = RNA(n+1) + diphosphate. DNA-dependent RNA polymerase catalyzes the transcription of DNA into RNA using the four ribonucleoside triphosphates as substrates. This chain is DNA-directed RNA polymerase subunit beta', found in Geobacter sp. (strain M21).